The chain runs to 341 residues: Enduracididine beta-hydroxylase (341 aa).

2 residues coordinate Fe cation: His-146 and Glu-148. The segment at 203–223 is disordered; it reads HRIHGKAPGDESARESALRER. Residue His-300 participates in Fe cation binding.

Belongs to the clavaminate synthase family. Requires Fe(2+) as cofactor.

The catalysed reaction is L-enduracididine + 2-oxoglutarate + O2 = (3S)-3-hydroxy-L-enduracididine + succinate + CO2. It participates in antibiotic biosynthesis. In terms of biological role, hydroxylates the beta carbon of free L-enduracididine to produce (3S)-3-hydroxy-L-enduracididine in biosynthesis of the nonproteinogenic amino acid beta-hydroxyenduracididine, a component of antibiotic mannopeptimycin. This Streptomyces hygroscopicus protein is Enduracididine beta-hydroxylase (mppO).